Consider the following 428-residue polypeptide: Anaerobic glycerol-3-phosphate dehydrogenase subunit B (428 aa).

This sequence belongs to the anaerobic G-3-P dehydrogenase subunit B family. In terms of assembly, composed of a catalytic GlpA/B dimer and of membrane bound GlpC. FMN serves as cofactor.

It catalyses the reaction a quinone + sn-glycerol 3-phosphate = dihydroxyacetone phosphate + a quinol. It functions in the pathway polyol metabolism; glycerol degradation via glycerol kinase pathway; glycerone phosphate from sn-glycerol 3-phosphate (anaerobic route): step 1/1. Its function is as follows. Conversion of glycerol 3-phosphate to dihydroxyacetone. Uses fumarate or nitrate as electron acceptor. The chain is Anaerobic glycerol-3-phosphate dehydrogenase subunit B from Pasteurella multocida (strain Pm70).